Consider the following 302-residue polypeptide: MSTKFNVKTFQGMILALQEYWANQGCTIVQPFDMEVGAGTSHPMTALRALGPEPMAFAYVQPSRRPTDGRYGENPNRLQHYYQFQVVIKPSPDNIQELYLGSLEMLGFDPTQNDIRFVEDNWENPTLGAWGLGWEVWLNGMEVTQFTYFQQVGGLECKPVTGEVTYGLERLAMYIQGVDSVYDLVWSDGPLGKTTYGDVFHQNEVEQSTYNFEHANTDFLFYCFDQYEKEAQELLALEKPLPLPAYERILKAAHSFNLLDARKAISVTERQRYILRIRTLTKGVAEAYYASREALGFPGCKK.

Belongs to the class-II aminoacyl-tRNA synthetase family. Tetramer of two alpha and two beta subunits.

It is found in the cytoplasm. The catalysed reaction is tRNA(Gly) + glycine + ATP = glycyl-tRNA(Gly) + AMP + diphosphate. This Haemophilus influenzae (strain PittGG) protein is Glycine--tRNA ligase alpha subunit.